Here is a 353-residue protein sequence, read N- to C-terminus: Galectin-9 (353 aa).

A Galectin 1 domain is found at 17–147 (FTGPIQGGLQ…CLKLSFITFQ (131 aa)). Residues Asn-47, His-60, Arg-64, Asn-74, and 81 to 87 (WGPEERK) each bind a beta-D-galactoside. A disordered region spans residues 167–186 (QFPRTPKGRKQKTQNFRPAH). The Galectin 2 domain maps to 225 to 353 (FYTPIPNGLY…GDIQLTHVQT (129 aa)). Residues His-265, Arg-269, Thr-279, and 285 to 291 (WGQEERS) each bind a beta-D-galactoside.

In terms of assembly, homodimer. Accentuated expression in liver and thymus of embryo, detected in embryonic heart, brain, lung, liver, and kidney. Highly expressed in adult thymus, small intestine, and liver, and to a lesser extent in lung, kidney, spleen, cardiac, and skeletal muscle. Barely detectable in brain and reticulocyte. Expressed in placenta, uterus and decidua during pregnancy. Expressed in CD4+ T-cells with higher levels in iTreg cells than other T-cell types and sustained high levels throughout iTreg cell differentiation (at protein level). Expressed in myeloid cells in lung. Constitutively expressed in microglia. Isoform 1 is expressed exclusively in the small intestine. Isoform 2 expression in decidua increases in pathological pregnancy from gestation day 7.5 to 13.5 and it is higher than in normal pregnancy. Isoform 3 expression in decidua is higher in normal pregnancy than in pathological pregnancy.

Its subcellular location is the cytoplasm. It is found in the nucleus. The protein localises to the secreted. Functionally, binds galactosides. Has high affinity for the Forssman pentasaccharide. Ligand for HAVCR2/TIM3. Binding to HAVCR2 induces T-helper type 1 lymphocyte (Th1) death. Also stimulates bactericidal activity in infected macrophages by causing macrophage activation and IL1B secretion which restricts intracellular bacterial growth. Ligand for P4HB; the interaction retains P4HB at the cell surface of Th2 T-helper cells, increasing disulfide reductase activity at the plasma membrane, altering the plasma membrane redox state and enhancing cell migration. Ligand for CD44; the interaction enhances binding of SMAD3 to the FOXP3 promoter, leading to up-regulation of FOXP3 expression and increased induced regulatory T (iTreg) cell stability and suppressive function. Promotes ability of mesenchymal stromal cells to suppress T-cell proliferation. Expands regulatory T-cells and induces cytotoxic T-cell apoptosis following virus infection. Activates ERK1/2 phosphorylation inducing cytokine (IL-6, IL-8, IL-12) and chemokine (CCL2) production in mast and dendritic cells. Inhibits degranulation and induces apoptosis of mast cells. Induces maturation and migration of dendritic cells. Inhibits natural killer (NK) cell function. Can transform NK cell phenotype from peripheral to decidual during pregnancy. Astrocyte derived galectin-9 enhances microglial TNF production. May play a role in thymocyte-epithelial interactions relevant to the biology of the thymus. May provide the molecular basis for urate flux across cell membranes, allowing urate that is formed during purine metabolism to efflux from cells and serving as an electrogenic transporter that plays an important role in renal and gastrointestinal urate excretion. Highly selective to the anion urate. Its function is as follows. Acts as an eosinophil chemoattractant. It also inhibits angiogenesis. Suppresses IFNG production by natural killer cells. The polypeptide is Galectin-9 (Lgals9) (Mus musculus (Mouse)).